Consider the following 1127-residue polypeptide: MASSSSSSSRNWSYHVFPSFSGEDVRNTFLSHFLKELDRKLIISFKDNEIERSQSLDPELKHGIRNSRIAVVVFSKTYASSSWCLNELLEIVKCKKEFGQLVIPIFYNLDPSHVRKQTGDFGKIFEKTCRNKTVDEKIRWKEALTDVANILGYHIVTWDNEASMIEEIANDILGKMNISPSNDFEDLVGIEDHITKMSSLLHLESEEVRMVGIWGPSGIGKTTIARALFSRLSCQFQSSVFIDKVFISKSMEVYSGANLVDYNMKLHLQRAFLAEIFDKKDIKIHVGAMEKMVKHRKALIVIDDLDDQDVLDALADQTQWFGSGSRIIVVTENKHFLRANRIDHIYKVCLPSNALALEMFCRSAFKKNSPPDDFLELSSEVALRAGNLPLGLNVLGSNLRGINKGYWIDMLPRLQGLDGKIGKTLRVSYDGLNNRKDEAIFRHIACIFNGEKVSDIKLLLANSNLDVNIGLKNLVDRSLICERFNTLEMHSLLQELGKEIVRTQSNQPGEREFLVDLKDICDVLEHNTGTKKVLGITLDIDETDELHIHESSFKGMHNLLFLKIYTKKLDQKKKVRWHLPERFDYLPSRLRLLRFDRYPSKCLPSNFHPENLVKLQMQQSKLEKLWDGVHSLAGLRNMDLRGSRNLKEIPDLSMATNLETLKLSSCSSLVELPSSIQYLNKLNDLDMSYCDHLETIPSGVNLKSLDRLNLSGCSRLKSFLDIPTNISWLDIGQTADIPSNLRLQNLDELILCERVQLRTPLMTMLSPTLTRLTFSNNPSFVEVPSSIQNLYQLEHLEIMNCRNLVTLPTGINLDSLISLDLSHCSQLKTFPDISTNISDLNLSYTAIEEVPLSIEKLSLLCYLDMNGCSNLLCVSPNISKLKHLERADFSDCVELTEASWNGSSSEMVKLLPADNFSTVKLNFINCFKLDLTALIQNQTFFMQLILTGEEVPSYFTHRTSGDSISLPHISVCQSFFSFRGCTVIDVDSFSTISVSFDIEVCCRFIDRFGNHFDSTDFPGYFITTKLGGHLVVFDCYFPFNEEFTTFLDGQFNYDHVDIQFRLTNDNSQLKLKGCGILLSEDVPSLDNRPCSPNILPGVCEDSALERRSFRTKMRMMRMRLLKKLLNR.

Met-1 carries the N-acetylmethionine modification. In terms of domain architecture, TIR spans 12–176 (WSYHVFPSFS…EIANDILGKM (165 aa)). Glu-87 is a catalytic residue. An NB-ARC domain is found at 191–452 (EDHITKMSSL…HIACIFNGEK (262 aa)). LRR repeat units lie at residues 197–221 (MSSLLHLESEEVRMVGIWGPSGIGK), 540–563 (IDETDELHIHESSFKGMHNLLFLK), 587–609 (PSRLRLLRFDRYPSKCLPSNFHP), 610–632 (ENLVKLQMQQSKLEKLWDGVHSL), 633–656 (AGLRNMDLRGSRNLKEIPDLSMAT), 658–679 (LETLKLSSCSSLVELPSSIQYL), 680–704 (NKLNDLDMSYCDHLETIPSGVNLKS), 766–790 (SPTLTRLTFSNNPSFVEVPSSIQNL), 791–813 (YQLEHLEIMNCRNLVTLPTGINL), 814–834 (DSLISLDLSHCSQLKTFPDIS), and 835–857 (TNISDLNLSYTAIEEVPLSIEKL).

In terms of assembly, interacts with EDS1. In terms of tissue distribution, ubiquitous.

The enzyme catalyses NAD(+) + H2O = ADP-D-ribose + nicotinamide + H(+). Its function is as follows. Disease resistance (R) protein that specifically recognizes the hopA1 type III effector avirulence protein from Pseudomonas syringae. Resistance proteins guard the plant against pathogens that contain an appropriate avirulence protein via an indirect interaction with this avirulence protein. That triggers a defense system including the hypersensitive response, which restricts the pathogen growth. This chain is Disease resistance protein RPS6 (RPS6), found in Arabidopsis thaliana (Mouse-ear cress).